The chain runs to 1447 residues: Spike glycoprotein (1447 aa).

Residues 1 to 28 (MKKLFVVLVVMPLIYGDNFPCSKLTNRT) form the signal peptide. S1 stretches follow at residues 17–774 (DNFP…FYYY) and 29–774 (IGNQ…FYYY). Residues 29-1388 (IGNQWNLIET…NRIETYVKWP (1360 aa)) lie on the Virion surface side of the membrane. The interaction with host ANPEP stretch occupies residues 655 to 799 (VIYEEGDNIV…DSNDVDCEPV (145 aa)). Positions 775–1447 (SIYNYTNDRT…YEPIEKVHVH (673 aa)) are S2. A fusion peptide region spans residues 1020-1041 (AGGITLGALGGGAVAIPFAVAV). Residues 1035-1154 (IPFAVAVQAR…QVDRLITGRL (120 aa)) form a heptad repeat 1 (HR1) region. Coiled-coil stretches lie at residues 1102–1146 (QDVV…DAQV) and 1336–1378 (TYLN…LEWL). Residues 1303–1400 (PDYIDINQTV…VWLLIGLVVI (98 aa)) are heptad repeat 2 (HR2). Residues 1389-1408 (WYVWLLIGLVVIFCIPLLLF) form a helical membrane-spanning segment. The Intravirion portion of the chain corresponds to 1409-1447 (CCCSTGCCGCIGCLGSCCHSICSRRQFENYEPIEKVHVH). The KxHxx motif lies at 1443–1447 (KVHVH).

It belongs to the alphacoronaviruses spike protein family. In terms of assembly, homotrimer. During virus morphogenesis, found in a complex with M and HE proteins. Interacts with host ANPEP.

The protein resides in the virion membrane. Its subcellular location is the host endoplasmic reticulum-Golgi intermediate compartment membrane. Functionally, S1 region attaches the virion to the cell membrane by interacting with host ANPEP/aminopeptidase N, initiating the infection. Binding to the receptor probably induces conformational changes in the S glycoprotein unmasking the fusion peptide of S2 region and activating membranes fusion. S2 region belongs to the class I viral fusion protein. Under the current model, the protein has at least 3 conformational states: pre-fusion native state, pre-hairpin intermediate state, and post-fusion hairpin state. During viral and target cell membrane fusion, the coiled coil regions (heptad repeats) regions assume a trimer-of-hairpins structure, positioning the fusion peptide in close proximity to the C-terminal region of the ectodomain. The formation of this structure appears to drive apposition and subsequent fusion of viral and target cell membranes. The polypeptide is Spike glycoprotein (Sus scrofa (Pig)).